The sequence spans 1252 residues: ATP-dependent helicase/nuclease subunit A (1252 aa).

The region spanning Thr-6 to Arg-489 is the UvrD-like helicase ATP-binding domain. Residue Ala-27–Thr-34 coordinates ATP. Positions Ala-523 to Gly-811 constitute a UvrD-like helicase C-terminal domain.

The protein belongs to the helicase family. AddA subfamily. In terms of assembly, heterodimer of AddA and AddB/RexB. Requires Mg(2+) as cofactor.

The enzyme catalyses Couples ATP hydrolysis with the unwinding of duplex DNA by translocating in the 3'-5' direction.. It catalyses the reaction ATP + H2O = ADP + phosphate + H(+). In terms of biological role, the heterodimer acts as both an ATP-dependent DNA helicase and an ATP-dependent, dual-direction single-stranded exonuclease. Recognizes the chi site generating a DNA molecule suitable for the initiation of homologous recombination. The AddA nuclease domain is required for chi fragment generation; this subunit has the helicase and 3' -&gt; 5' nuclease activities. This Clostridium acetobutylicum (strain ATCC 824 / DSM 792 / JCM 1419 / IAM 19013 / LMG 5710 / NBRC 13948 / NRRL B-527 / VKM B-1787 / 2291 / W) protein is ATP-dependent helicase/nuclease subunit A.